Consider the following 312-residue polypeptide: Short chain dehydrogenase pgmD (312 aa).

NADP(+)-binding residues include V46, I47, K171, Y207, K211, and T242. The Proton donor role is filled by Y207. The active-site Lowers pKa of active site Tyr is K211.

This sequence belongs to the short-chain dehydrogenases/reductases (SDR) family.

The protein operates within pigment biosynthesis. It participates in secondary metabolite biosynthesis. Its function is as follows. Short chain dehydrogenase; part of the gene cluster that mediates the biosynthesis of pleosporalin A, ascomycone A, as well as a third cryptic naphthoquinone derived pigment, all responsible for the coloration of conidia. Essential for the production of pleosporalin A, but not the 2 other final products. The pathway begins with the biosynthesis of the cyclized heptaketide 3-acetonyl-1,6,8-trihydroxy-2-naphthaldehyde by the NR-PKS pgmA. The C-6 hydroxyl group is further methylated by the O-methyltransferase pgmB to yield fusarubinaldehyde which is in turn oxidized by the cytochrome P450 monooxygenase pgmC at C-9. The C-1 hydroxyl group is then methylated spontaneously. Although pgmE, pgmD and pgmH are essential for the production of pleosporalin A, it is not the case for the 2 other final products and it remains difficult to assign a specific function to each enzyme. PgmF and pgmG seem not to be involved in pigment biosynthesis although they were regulated by the cluster-specific transcription factor pgmR. The sequence is that of Short chain dehydrogenase pgmD from Aspergillus terreus (strain NIH 2624 / FGSC A1156).